The following is a 115-amino-acid chain: MARVKRGNVARKRRNKILRLARGFRGSNGTLFRTANQRVMKALCNAYRDRRRRKRDFRRLWIARINAAARLNGVSYSRLIGGLKQADVRINRKMLAQLAVADPSSFTTVVNATQG.

This sequence belongs to the bacterial ribosomal protein bL20 family.

Functionally, binds directly to 23S ribosomal RNA and is necessary for the in vitro assembly process of the 50S ribosomal subunit. It is not involved in the protein synthesizing functions of that subunit. The polypeptide is Large ribosomal subunit protein bL20 (Synechococcus sp. (strain WH7803)).